The sequence spans 137 residues: Holo-[acyl-carrier-protein] synthase (137 aa).

Residues Asp8 and Glu58 each contribute to the Mg(2+) site.

Belongs to the P-Pant transferase superfamily. AcpS family. The cofactor is Mg(2+).

Its subcellular location is the cytoplasm. The catalysed reaction is apo-[ACP] + CoA = holo-[ACP] + adenosine 3',5'-bisphosphate + H(+). Functionally, transfers the 4'-phosphopantetheine moiety from coenzyme A to a Ser of acyl-carrier-protein. This is Holo-[acyl-carrier-protein] synthase from Lactobacillus delbrueckii subsp. bulgaricus (strain ATCC BAA-365 / Lb-18).